A 239-amino-acid chain; its full sequence is 2,3,4,5-tetrahydropyridine-2,6-dicarboxylate N-acetyltransferase (239 aa).

The protein belongs to the transferase hexapeptide repeat family. DapH subfamily.

It carries out the reaction (S)-2,3,4,5-tetrahydrodipicolinate + acetyl-CoA + H2O = L-2-acetamido-6-oxoheptanedioate + CoA. It functions in the pathway amino-acid biosynthesis; L-lysine biosynthesis via DAP pathway; LL-2,6-diaminopimelate from (S)-tetrahydrodipicolinate (acetylase route): step 1/3. Functionally, catalyzes the transfer of an acetyl group from acetyl-CoA to tetrahydrodipicolinate. The chain is 2,3,4,5-tetrahydropyridine-2,6-dicarboxylate N-acetyltransferase from Staphylococcus haemolyticus (strain JCSC1435).